The primary structure comprises 421 residues: 3-isopropylmalate dehydratase large subunit (421 aa).

Residues Cys-300, Cys-360, and Cys-363 each coordinate [4Fe-4S] cluster.

This sequence belongs to the aconitase/IPM isomerase family. LeuC type 2 subfamily. In terms of assembly, heterodimer of LeuC and LeuD. It depends on [4Fe-4S] cluster as a cofactor.

The catalysed reaction is (2R,3S)-3-isopropylmalate = (2S)-2-isopropylmalate. It participates in amino-acid biosynthesis; L-leucine biosynthesis; L-leucine from 3-methyl-2-oxobutanoate: step 2/4. Catalyzes the isomerization between 2-isopropylmalate and 3-isopropylmalate, via the formation of 2-isopropylmaleate. The protein is 3-isopropylmalate dehydratase large subunit of Moorella thermoacetica (strain ATCC 39073 / JCM 9320).